A 97-amino-acid chain; its full sequence is Protein Vpr (97 aa).

The homooligomerization stretch occupies residues 1–42; the sequence is MEQAPENQGPAKEPFNEWALELLEELKAEAVRHFPRPWLHAL. Residues serine 79, serine 95, and serine 97 each carry the phosphoserine; by host modification.

This sequence belongs to the HIV-1 VPR protein family. In terms of assembly, homooligomer, may form homodimer. Interacts with p6-gag region of the Pr55 Gag precursor protein through a (Leu-X-X)4 motif near the C-terminus of the P6gag protein. Interacts with host UNG. May interact with host RAD23A/HHR23A. Interacts with host VPRBP/DCAF1, leading to hijack the CUL4A-RBX1-DDB1-DCAF1/VPRBP complex, mediating ubiquitination of host proteins such as TERT and ZGPAT and arrest of the cell cycle in G2 phase. Post-translationally, phosphorylated on several residues by host. These phosphorylations regulate VPR activity for the nuclear import of the HIV-1 pre-integration complex.

It localises to the virion. Its subcellular location is the host nucleus. It is found in the host extracellular space. During virus replication, may deplete host UNG protein, and incude G2-M cell cycle arrest. Acts by targeting specific host proteins for degradation by the 26S proteasome, through association with the cellular CUL4A-DDB1 E3 ligase complex by direct interaction with host VPRPB/DCAF-1. Cell cycle arrest reportedly occurs within hours of infection and is not blocked by antiviral agents, suggesting that it is initiated by the VPR carried into the virion. Additionally, VPR induces apoptosis in a cell cycle dependent manner suggesting that these two effects are mechanistically linked. Detected in the serum and cerebrospinal fluid of AIDS patient, VPR may also induce cell death to bystander cells. Its function is as follows. During virus entry, plays a role in the transport of the viral pre-integration (PIC) complex to the host nucleus. This function is crucial for viral infection of non-dividing macrophages. May act directly at the nuclear pore complex, by binding nucleoporins phenylalanine-glycine (FG)-repeat regions. The sequence is that of Protein Vpr from Human immunodeficiency virus type 1 group O (isolate ANT70) (HIV-1).